Consider the following 195-residue polypeptide: Ubiquitin-conjugating enzyme E2 T (195 aa).

The region spanning 2 to 152 is the UBC core domain; it reads QRTSRLKREL…ARQWTEKHAR (151 aa). Residue cysteine 86 is the Glycyl thioester intermediate of the active site. A Glycyl lysine isopeptide (Lys-Gly) (interchain with G-Cter in ubiquitin) cross-link involves residue lysine 91. A compositionally biased stretch (basic and acidic residues) spans 146–157; the sequence is WTEKHARQKTDE. The disordered stretch occupies residues 146-195; that stretch reads WTEKHARQKTDEEGMPGSLPEVGGSEGPSAAQKRKAGQLSSGGKRFCPDV. A Glycyl lysine isopeptide (Lys-Gly) (interchain with G-Cter in ubiquitin) cross-link involves residue lysine 180. A Glycyl lysine isopeptide (Lys-Gly) (interchain with G-Cter in SUMO2) cross-link involves residue lysine 189.

Belongs to the ubiquitin-conjugating enzyme family. In terms of assembly, interacts with FANCL and BRCA1. Post-translationally, auto-ubiquitinated. Effects of auto-monoubiquitination at Lys-91 and Lys-180 are unclear.

Its subcellular location is the nucleus. It carries out the reaction S-ubiquitinyl-[E1 ubiquitin-activating enzyme]-L-cysteine + [E2 ubiquitin-conjugating enzyme]-L-cysteine = [E1 ubiquitin-activating enzyme]-L-cysteine + S-ubiquitinyl-[E2 ubiquitin-conjugating enzyme]-L-cysteine.. Its pathway is protein modification; protein ubiquitination. Accepts ubiquitin from the E1 complex and catalyzes its covalent attachment to other proteins. Catalyzes monoubiquitination. Involved in mitomycin-C (MMC)-induced DNA repair: acts as a specific E2 ubiquitin-conjugating enzyme for the Fanconi anemia complex by associating with E3 ubiquitin-protein ligase FANCL and catalyzing monoubiquitination of FANCD2, a key step in the DNA damage pathway. Also mediates monoubiquitination of FANCL and FANCI. May contribute to ubiquitination and degradation of BRCA1. In vitro able to promote polyubiquitination using all 7 ubiquitin Lys residues, but may prefer 'Lys-11'-, 'Lys-27'-, 'Lys-48'- and 'Lys-63'-linked polyubiquitination. This Bos taurus (Bovine) protein is Ubiquitin-conjugating enzyme E2 T (UBE2T).